The following is a 121-amino-acid chain: Ribonuclease P protein component (121 aa).

It belongs to the RnpA family. Consists of a catalytic RNA component (M1 or rnpB) and a protein subunit.

The catalysed reaction is Endonucleolytic cleavage of RNA, removing 5'-extranucleotides from tRNA precursor.. Functionally, RNaseP catalyzes the removal of the 5'-leader sequence from pre-tRNA to produce the mature 5'-terminus. It can also cleave other RNA substrates such as 4.5S RNA. The protein component plays an auxiliary but essential role in vivo by binding to the 5'-leader sequence and broadening the substrate specificity of the ribozyme. This is Ribonuclease P protein component from Nitrosomonas eutropha (strain DSM 101675 / C91 / Nm57).